Here is a 522-residue protein sequence, read N- to C-terminus: Ribonuclease Y (522 aa).

Residues 2–22 (WVEILVGSSAAIISGAAGYLL) traverse the membrane as a helical segment. Residues 212-278 (LINTVSIPSE…TKVIELLVED (67 aa)) enclose the KH domain. The HD domain occupies 338 to 431 (ALGHSLEVAH…VCAADTLSAA (94 aa)).

Belongs to the RNase Y family.

The protein localises to the cell membrane. Its function is as follows. Endoribonuclease that initiates mRNA decay. This chain is Ribonuclease Y, found in Nitratiruptor sp. (strain SB155-2).